Consider the following 258-residue polypeptide: Allene oxide cyclase 3, chloroplastic (258 aa).

The N-terminal 56 residues, 1–56 (MASSSAAMSLESISMTTLNNLSRNHQSHRSSLLGFSRSFQNLGISSNGPDFSSRSR), are a transit peptide targeting the chloroplast.

This sequence belongs to the allene oxide cyclase family. Highly expressed in fully developed leaves.

The protein resides in the plastid. The protein localises to the chloroplast. It catalyses the reaction (9Z,13S,15Z)-12,13-epoxyoctadeca-9,11,15-trienoate = (9S,13S,15Z)-12-oxophyto-10,15-dienoate. Functionally, involved in the production of 12-oxo-phytodienoic acid (OPDA), a precursor of jasmonic acid. The polypeptide is Allene oxide cyclase 3, chloroplastic (AOC3) (Arabidopsis thaliana (Mouse-ear cress)).